The primary structure comprises 31 residues: Alpha-conotoxin Li1.12 (31 aa).

Residues 1 to 15 (AGNAKMSALMALTIR) constitute a propeptide that is removed on maturation. Disulfide bonds link Cys17–Cys23 and Cys18–Cys30. Residue Cys30 is modified to Cysteine amide.

It belongs to the conotoxin A superfamily. Expressed by the venom duct.

The protein localises to the secreted. Alpha-conotoxins act on postsynaptic membranes, they bind to the nicotinic acetylcholine receptors (nAChR) and thus inhibit them. This toxin inhibits alpha-3-beta-4, alpha-6/alpha-3-beta-4, and alpha-2-beta-4 nAChRs. This is Alpha-conotoxin Li1.12 from Conus lividus (Livid cone).